Reading from the N-terminus, the 146-residue chain is Lipoprotein signal peptidase (146 aa).

3 helical membrane passes run Gly10–Phe30, Phe54–Leu74, and Phe80–Leu100. Residues Asp110 and Asp127 contribute to the active site. Residues Phe118–Leu138 traverse the membrane as a helical segment.

Belongs to the peptidase A8 family.

The protein localises to the cell inner membrane. The catalysed reaction is Release of signal peptides from bacterial membrane prolipoproteins. Hydrolyzes -Xaa-Yaa-Zaa-|-(S,diacylglyceryl)Cys-, in which Xaa is hydrophobic (preferably Leu), and Yaa (Ala or Ser) and Zaa (Gly or Ala) have small, neutral side chains.. Its pathway is protein modification; lipoprotein biosynthesis (signal peptide cleavage). This protein specifically catalyzes the removal of signal peptides from prolipoproteins. The chain is Lipoprotein signal peptidase from Wolinella succinogenes (strain ATCC 29543 / DSM 1740 / CCUG 13145 / JCM 31913 / LMG 7466 / NCTC 11488 / FDC 602W) (Vibrio succinogenes).